The primary structure comprises 194 residues: Probable GTP-binding protein EngB (194 aa).

Residues 22–194 (LFLEVAFAGR…WQELDTMLNP (173 aa)) enclose the EngB-type G domain. GTP-binding positions include 30–37 (GRSNVGKS), 57–61 (GCTQL), 75–78 (DLPG), 142–145 (TKAD), and 173–175 (FSS). Positions 37 and 59 each coordinate Mg(2+).

This sequence belongs to the TRAFAC class TrmE-Era-EngA-EngB-Septin-like GTPase superfamily. EngB GTPase family. Requires Mg(2+) as cofactor.

Functionally, necessary for normal cell division and for the maintenance of normal septation. This is Probable GTP-binding protein EngB from Desulforapulum autotrophicum (strain ATCC 43914 / DSM 3382 / VKM B-1955 / HRM2) (Desulfobacterium autotrophicum).